The following is a 734-amino-acid chain: Casein kinase II subunit alpha'-interacting protein (734 aa).

The segment at 608–654 (SLLPSTSSSTSSSSTTSSSSSVASASSDSSSSSSSSSSFSISSSSSP) is disordered. Positions 612–654 (STSSSTSSSSTTSSSSSVASASSDSSSSSSSSSSFSISSSSSP) are enriched in low complexity.

In terms of assembly, interacts (via C-terminus) with CSNK2A2. In terms of processing, phosphorylated by CK2 (casein kinase II), specifically by complexes containing catalytic subunit CSNK2A2.

It localises to the nucleus. In terms of biological role, may play a role in chromatin regulation of male germ cells. This chain is Casein kinase II subunit alpha'-interacting protein, found in Homo sapiens (Human).